Reading from the N-terminus, the 348-residue chain is UPF0324 membrane protein BH02290 (348 aa).

The next 11 membrane-spanning stretches (helical) occupy residues Ala13 to Leu35, Gln45 to Leu67, Gly74 to Val96, Leu106 to Phe128, Ala135 to Ile157, Ser167 to Leu189, Tyr196 to Ser218, Gln223 to Ile245, Leu257 to Arg275, Leu285 to Val307, and Val319 to Asn341.

It belongs to the UPF0324 family.

Its subcellular location is the cell membrane. This Bartonella henselae (strain ATCC 49882 / DSM 28221 / CCUG 30454 / Houston 1) (Rochalimaea henselae) protein is UPF0324 membrane protein BH02290.